Consider the following 165-residue polypeptide: Transcription antitermination protein NusB (165 aa).

Residues 139–165 (EAVRSHRRNKRPAADKPVATDKPAAAE) are disordered.

It belongs to the NusB family.

Functionally, involved in transcription antitermination. Required for transcription of ribosomal RNA (rRNA) genes. Binds specifically to the boxA antiterminator sequence of the ribosomal RNA (rrn) operons. The protein is Transcription antitermination protein NusB of Laribacter hongkongensis (strain HLHK9).